A 212-amino-acid polypeptide reads, in one-letter code: UPF0502 protein ECA2523 (212 aa).

Belongs to the UPF0502 family.

This Pectobacterium atrosepticum (strain SCRI 1043 / ATCC BAA-672) (Erwinia carotovora subsp. atroseptica) protein is UPF0502 protein ECA2523.